Reading from the N-terminus, the 141-residue chain is Transmembrane protein 216 (141 aa).

A run of 4 helical transmembrane segments spans residues Ile-15 to Phe-35, Leu-49 to Phe-69, Leu-82 to Leu-102, and Ser-115 to Phe-135.

Part of the tectonic-like complex (also named B9 complex). Interacts with TMEM107.

It localises to the membrane. The protein resides in the cytoplasm. Its subcellular location is the cytoskeleton. It is found in the cilium basal body. Its function is as follows. Part of the tectonic-like complex which is required for tissue-specific ciliogenesis and may regulate ciliary membrane composition. In Bos taurus (Bovine), this protein is Transmembrane protein 216 (TMEM216).